A 232-amino-acid chain; its full sequence is Large ribosomal subunit protein uL1 (232 aa).

It belongs to the universal ribosomal protein uL1 family. As to quaternary structure, part of the 50S ribosomal subunit.

In terms of biological role, binds directly to 23S rRNA. The L1 stalk is quite mobile in the ribosome, and is involved in E site tRNA release. Its function is as follows. Protein L1 is also a translational repressor protein, it controls the translation of the L11 operon by binding to its mRNA. The protein is Large ribosomal subunit protein uL1 of Azorhizobium caulinodans (strain ATCC 43989 / DSM 5975 / JCM 20966 / LMG 6465 / NBRC 14845 / NCIMB 13405 / ORS 571).